The sequence spans 602 residues: Probable beta-glucosidase btgE (602 aa).

The first 18 residues, 1 to 18 (MRGAFLAAAAAVAGTAMA), serve as a signal peptide directing secretion. Disordered stretches follow at residues 61–94 (PPTLVPINTPAPEPSSSSSSEVPSVPSSESSVVT) and 116–166 (GVDA…TSFS). Low complexity predominate over residues 74-94 (PSSSSSSEVPSVPSSESSVVT). The span at 152–166 (TSESPLPTPGVTSFS) shows a compositional bias: polar residues. The active-site Proton donor is the E443. The active-site Nucleophile is the E538.

The protein belongs to the glycosyl hydrolase 17 family.

It is found in the secreted. The protein resides in the cell wall. It catalyses the reaction Hydrolysis of terminal, non-reducing beta-D-glucosyl residues with release of beta-D-glucose.. Its pathway is glycan metabolism; cellulose degradation. In terms of biological role, beta-glucosidases are one of a number of cellulolytic enzymes involved in the degradation of cellulosic biomass. Catalyzes the last step releasing glucose from the inhibitory cellobiose. This chain is Probable beta-glucosidase btgE (btgE), found in Aspergillus flavus (strain ATCC 200026 / FGSC A1120 / IAM 13836 / NRRL 3357 / JCM 12722 / SRRC 167).